The chain runs to 195 residues: Protein SYM1 (195 aa).

4 helical membrane-spanning segments follow: residues 17–39 (LITNMITTGLLVGGGDALAQFFF), 59–78 (RAIIYGSLIFAPIGDKWYKF), 99–121 (STLLRVMVDQLVFAPFIGIPLYY), and 168–190 (PVQFRLLAVNIISIGWNTYLSYV).

This sequence belongs to the peroxisomal membrane protein PXMP2/4 family.

It localises to the mitochondrion inner membrane. Its function is as follows. May be involved in cellular response to stress. Required to maintain mitochondrial DNA (mtDNA) integrity and stability. This chain is Protein SYM1 (SYM1), found in Candida albicans (strain SC5314 / ATCC MYA-2876) (Yeast).